The sequence spans 852 residues: Taste receptor type 1 member 3 (852 aa).

The N-terminal stretch at 1–20 is a signal peptide; sequence MLGPAVLGLSLWALLHPGTG. At 21–570 the chain is on the extracellular side; the sequence is APLCLSQQLR…FLAWGEPAVL (550 aa). N-linked (GlcNAc...) asparagine glycosylation is found at asparagine 85, asparagine 130, asparagine 264, asparagine 285, asparagine 380, asparagine 411, asparagine 432, and asparagine 475. The tract at residues 536 to 545 is required for brazzein responsiveness; the sequence is IACTFCGQDE. The chain crosses the membrane as a helical span at residues 571–591; the sequence is LLLLLLSLALGLVLAALGLFV. Over 592–603 the chain is Cytoplasmic; sequence HHRDSPLVQASG. Residues 604-624 form a helical membrane-spanning segment; that stretch reads GPLACFGLVCLGLVCLSVLLF. Residues 625 to 639 are Extracellular-facing; it reads PGQPSPARCLAQQPL. The helical transmembrane segment at 640-660 threads the bilayer; it reads SHLPLTGCLSTLFLQAAEIFV. Residues 661–682 are Cytoplasmic-facing; it reads ESELPLSWADRLSGCLRGPWAW. A helical membrane pass occupies residues 683-703; the sequence is LVVLLAMLVEVALCTWYLVAF. The Extracellular portion of the chain corresponds to 704 to 729; the sequence is PPEVVTDWHMLPTEALVHCRTRSWVS. A helical membrane pass occupies residues 730–750; it reads FGLAHATNATLAFLCFLGTFL. At 751–762 the chain is on the cytoplasmic side; the sequence is VRSQPGCYNRAR. Residues 763-783 traverse the membrane as a helical segment; that stretch reads GLTFAMLAYFITWVSFVPLLA. Topologically, residues 784 to 789 are extracellular; the sequence is NVQVVL. A helical membrane pass occupies residues 790-810; the sequence is RPAVQMGALLLCVLGILAAFH. The Cytoplasmic portion of the chain corresponds to 811 to 852; it reads LPRCYLLMRQPGLNTPEFFLGGGPGDAQGQNDGNTGNQGKHE.

The protein belongs to the G-protein coupled receptor 3 family. TAS1R subfamily. As to quaternary structure, forms homodimers or heterodimers with TAS1R1 and TAS1R2.

Its subcellular location is the cell membrane. In terms of biological role, putative taste receptor. TAS1R1/TAS1R3 responds to the umami taste stimulus (the taste of monosodium glutamate). TAS1R2/TAS1R3 recognizes diverse natural and synthetic sweeteners. TAS1R3 is essential for the recognition and response to the disaccharide trehalose. Sequence differences within and between species can significantly influence the selectivity and specificity of taste responses. The sequence is that of Taste receptor type 1 member 3 (TAS1R3) from Homo sapiens (Human).